The following is a 191-amino-acid chain: Xanthine phosphoribosyltransferase (191 aa).

Xanthine contacts are provided by Leu-20 and Asn-27. Ala-128–Ala-132 contributes to the 5-phospho-alpha-D-ribose 1-diphosphate binding site. Lys-156 serves as a coordination point for xanthine.

It belongs to the purine/pyrimidine phosphoribosyltransferase family. Xpt subfamily. Homodimer.

It localises to the cytoplasm. It carries out the reaction XMP + diphosphate = xanthine + 5-phospho-alpha-D-ribose 1-diphosphate. It functions in the pathway purine metabolism; XMP biosynthesis via salvage pathway; XMP from xanthine: step 1/1. Functionally, converts the preformed base xanthine, a product of nucleic acid breakdown, to xanthosine 5'-monophosphate (XMP), so it can be reused for RNA or DNA synthesis. This is Xanthine phosphoribosyltransferase from Limosilactobacillus reuteri (strain DSM 20016) (Lactobacillus reuteri).